Here is a 301-residue protein sequence, read N- to C-terminus: Lipoyl synthase (301 aa).

[4Fe-4S] cluster is bound by residues C50, C55, C61, C76, C80, C83, and S289. The 217-residue stretch at 62–278 folds into the Radical SAM core domain; it reads WNHRTATFLL…RRYALERGFR (217 aa).

The protein belongs to the radical SAM superfamily. Lipoyl synthase family. [4Fe-4S] cluster serves as cofactor.

The protein localises to the cytoplasm. It catalyses the reaction [[Fe-S] cluster scaffold protein carrying a second [4Fe-4S](2+) cluster] + N(6)-octanoyl-L-lysyl-[protein] + 2 oxidized [2Fe-2S]-[ferredoxin] + 2 S-adenosyl-L-methionine + 4 H(+) = [[Fe-S] cluster scaffold protein] + N(6)-[(R)-dihydrolipoyl]-L-lysyl-[protein] + 4 Fe(3+) + 2 hydrogen sulfide + 2 5'-deoxyadenosine + 2 L-methionine + 2 reduced [2Fe-2S]-[ferredoxin]. The protein operates within protein modification; protein lipoylation via endogenous pathway; protein N(6)-(lipoyl)lysine from octanoyl-[acyl-carrier-protein]: step 2/2. In terms of biological role, catalyzes the radical-mediated insertion of two sulfur atoms into the C-6 and C-8 positions of the octanoyl moiety bound to the lipoyl domains of lipoate-dependent enzymes, thereby converting the octanoylated domains into lipoylated derivatives. The chain is Lipoyl synthase from Roseiflexus sp. (strain RS-1).